The following is a 222-amino-acid chain: 7-cyano-7-deazaguanine synthase (222 aa).

Position 14–24 (14–24 (FSGGQDSTTCL)) interacts with ATP. Zn(2+) is bound by residues Cys-190, Cys-199, Cys-202, and Cys-205.

The protein belongs to the QueC family. In terms of assembly, homodimer. Requires Zn(2+) as cofactor.

It carries out the reaction 7-carboxy-7-deazaguanine + NH4(+) + ATP = 7-cyano-7-deazaguanine + ADP + phosphate + H2O + H(+). The protein operates within purine metabolism; 7-cyano-7-deazaguanine biosynthesis. In terms of biological role, catalyzes the ATP-dependent conversion of 7-carboxy-7-deazaguanine (CDG) to 7-cyano-7-deazaguanine (preQ(0)). The chain is 7-cyano-7-deazaguanine synthase from Staphylococcus aureus (strain bovine RF122 / ET3-1).